The primary structure comprises 607 residues: UvrABC system protein C (607 aa).

A GIY-YIG domain is found at 16 to 94; sequence GRPGVYRMFD…IKEWRPPYNI (79 aa). Residues 203–238 form the UVR domain; the sequence is NALTDELSGAMEQAASTLDFERAAELRDQISLLRRV.

Belongs to the UvrC family. Interacts with UvrB in an incision complex.

It is found in the cytoplasm. Its function is as follows. The UvrABC repair system catalyzes the recognition and processing of DNA lesions. UvrC both incises the 5' and 3' sides of the lesion. The N-terminal half is responsible for the 3' incision and the C-terminal half is responsible for the 5' incision. This Pseudomonas fluorescens (strain SBW25) protein is UvrABC system protein C.